We begin with the raw amino-acid sequence, 508 residues long: Photosystem II CP47 reaction center protein (508 aa).

The next 6 membrane-spanning stretches (helical) occupy residues 21–36 (SVHI…WAGS), 101–115 (IVFS…IWHW), 140–156 (GIHL…FGAF), 203–218 (IAAG…FHLS), 237–252 (VLSS…AFVV), and 457–472 (SFAL…HGAR).

It belongs to the PsbB/PsbC family. PsbB subfamily. In terms of assembly, PSII is composed of 1 copy each of membrane proteins PsbA, PsbB, PsbC, PsbD, PsbE, PsbF, PsbH, PsbI, PsbJ, PsbK, PsbL, PsbM, PsbT, PsbX, PsbY, PsbZ, Psb30/Ycf12, at least 3 peripheral proteins of the oxygen-evolving complex and a large number of cofactors. It forms dimeric complexes. The cofactor is Binds multiple chlorophylls. PSII binds additional chlorophylls, carotenoids and specific lipids..

It localises to the plastid. Its subcellular location is the chloroplast thylakoid membrane. One of the components of the core complex of photosystem II (PSII). It binds chlorophyll and helps catalyze the primary light-induced photochemical processes of PSII. PSII is a light-driven water:plastoquinone oxidoreductase, using light energy to abstract electrons from H(2)O, generating O(2) and a proton gradient subsequently used for ATP formation. This chain is Photosystem II CP47 reaction center protein, found in Manihot esculenta (Cassava).